Here is a 247-residue protein sequence, read N- to C-terminus: Probable transcriptional regulatory protein GTNG_2524 (247 aa).

Residues 1–14 (MAGHSKWKNIQRRK) show a composition bias toward basic residues. The disordered stretch occupies residues 1-21 (MAGHSKWKNIQRRKNAQDAKR).

This sequence belongs to the TACO1 family.

The protein resides in the cytoplasm. This is Probable transcriptional regulatory protein GTNG_2524 from Geobacillus thermodenitrificans (strain NG80-2).